Reading from the N-terminus, the 93-residue chain is Bublin coiled-coil protein (93 aa).

Disordered regions lie at residues 1–26 (MAGP…GDTF) and 74–93 (QQQS…QPPA). The segment covering 17–26 (DEGDEGGDTF) has biased composition (acidic residues). A coiled-coil region spans residues 59–80 (LKELLESNRQTRLEFQQQSKQL).

It belongs to the UPF0184 (EST00098) family.

The protein localises to the cell junction. It is found in the cytoplasm. The protein resides in the cytoskeleton. Essential for intermediate filament organization in intestinal cells, interacts with intermediate filament and regulates intestinal lumen morphology. The sequence is that of Bublin coiled-coil protein (BBLN) from Taeniopygia guttata (Zebra finch).